We begin with the raw amino-acid sequence, 385 residues long: G2/mitotic-specific cyclin-B3 (385 aa).

Over residues M1–A16 the composition is skewed to polar residues. Disordered regions lie at residues M1–G48 and S63–R88. Composition is skewed to basic and acidic residues over residues D17–E28 and S63–E80.

It belongs to the cyclin family. Cyclin AB subfamily.

The protein localises to the nucleus. Functionally, could be involved at the G2/M (mitosis) transition. Interacts with the CDK1 and CDK2 protein kinases. G2/M cyclins accumulate steadily during G2 and are abruptly destroyed at mitosis. Plays a role during oocyte meiosis II. The protein is G2/mitotic-specific cyclin-B3 (cyb-3) of Caenorhabditis elegans.